Reading from the N-terminus, the 120-residue chain is NAD(P)H-quinone oxidoreductase subunit 3, chloroplastic (120 aa).

Helical transmembrane passes span 10–30 (FLVF…ASKL), 64–84 (MFAL…PWAV), and 89–109 (MGFI…VGLV).

This sequence belongs to the complex I subunit 3 family. As to quaternary structure, NDH is composed of at least 16 different subunits, 5 of which are encoded in the nucleus.

The protein resides in the plastid. Its subcellular location is the chloroplast thylakoid membrane. The enzyme catalyses a plastoquinone + NADH + (n+1) H(+)(in) = a plastoquinol + NAD(+) + n H(+)(out). It carries out the reaction a plastoquinone + NADPH + (n+1) H(+)(in) = a plastoquinol + NADP(+) + n H(+)(out). In terms of biological role, NDH shuttles electrons from NAD(P)H:plastoquinone, via FMN and iron-sulfur (Fe-S) centers, to quinones in the photosynthetic chain and possibly in a chloroplast respiratory chain. The immediate electron acceptor for the enzyme in this species is believed to be plastoquinone. Couples the redox reaction to proton translocation, and thus conserves the redox energy in a proton gradient. The polypeptide is NAD(P)H-quinone oxidoreductase subunit 3, chloroplastic (Chlorokybus atmophyticus (Soil alga)).